A 639-amino-acid chain; its full sequence is Chaperone protein DnaK (639 aa).

Thr-198 is modified (phosphothreonine; by autocatalysis). The tract at residues 605-624 (SQAQGGAETNAGKQANAAAD) is disordered.

The protein belongs to the heat shock protein 70 family.

Functionally, acts as a chaperone. The protein is Chaperone protein DnaK of Shewanella putrefaciens (strain CN-32 / ATCC BAA-453).